Here is a 1062-residue protein sequence, read N- to C-terminus: Inactive tyrosine-protein kinase 7 (1062 aa).

A signal peptide spans 1–22 (MGARPLTLLRALLLPLLAGAQA). Ig-like C2-type domains are found at residues 23–112 (AIVF…ASFN), 120–210 (PVVL…FTLS), 217–309 (ARVV…EATL), 301–399 (PPIV…VNIT), 404–489 (PTWL…ARVQ), 495–578 (KFTP…HVQL), and 570–672 (GQIR…APLL). Topologically, residues 23 to 696 (AIVFIKEPSS…SPPPYKMIQT (674 aa)) are extracellular. A disulfide bridge links cysteine 45 with cysteine 93. Asparagine 98, asparagine 108, asparagine 176, asparagine 206, asparagine 260, and asparagine 275 each carry an N-linked (GlcNAc...) asparagine glycan. Residues cysteine 142 and cysteine 192 are joined by a disulfide bond. Intrachain disulfides connect cysteine 238–cysteine 293 and cysteine 335–cysteine 383. Residues asparagine 397, asparagine 455, asparagine 559, and asparagine 638 are each glycosylated (N-linked (GlcNAc...) asparagine). Cystine bridges form between cysteine 425/cysteine 473, cysteine 516/cysteine 562, and cysteine 605/cysteine 656. Residues 697-717 (IGLSVGAAVAYIIAVLGLMFY) form a helical membrane-spanning segment. The Cytoplasmic segment spans residues 718–1062 (CKKRCKAKRL…LGDSPADSKQ (345 aa)). Disordered regions lie at residues 728 to 750 (QKQP…QNGQ) and 1039 to 1062 (NPKD…DSKQ). The tract at residues 786 to 1062 (ASLQPITTLG…LGDSPADSKQ (277 aa)) is interaction with CTNNB1. Positions 788–1058 (LQPITTLGKS…IASTLGDSPA (271 aa)) constitute a Protein kinase; inactive domain. Serine 1056 carries the phosphoserine modification.

Belongs to the protein kinase superfamily. Tyr protein kinase family. Insulin receptor subfamily. As to quaternary structure, interacts with CTNNB1. MMP14 cleaves PTK7 between Pro-613 and Leu-614 generating an N-terminal soluble (70 kDa) fragment and a membrane C-terminal (50 kDa) fragment. Proteolysis by MMP14 regulates PTK7 function in non-canonical Wnt signaling pathway. As to expression, expressed at high levels in lung and un-pregnant uterus among adult tissues, and in the tail, limbs, somites, gut and craniofacial regions among embryonic tissues.

The protein resides in the membrane. The protein localises to the cell junction. Functionally, inactive tyrosine kinase involved in Wnt signaling pathway. Component of both the non-canonical (also known as the Wnt/planar cell polarity signaling) and the canonical Wnt signaling pathway. Functions in cell adhesion, cell migration, cell polarity, proliferation, actin cytoskeleton reorganization and apoptosis. Has a role in embryogenesis, epithelial tissue organization and angiogenesis. The sequence is that of Inactive tyrosine-protein kinase 7 (Ptk7) from Mus musculus (Mouse).